The chain runs to 255 residues: tRNA (guanine-N(1)-)-methyltransferase (255 aa).

Residues Gly113 and Ile133 to Leu138 contribute to the S-adenosyl-L-methionine site.

It belongs to the RNA methyltransferase TrmD family. In terms of assembly, homodimer.

It localises to the cytoplasm. It catalyses the reaction guanosine(37) in tRNA + S-adenosyl-L-methionine = N(1)-methylguanosine(37) in tRNA + S-adenosyl-L-homocysteine + H(+). Functionally, specifically methylates guanosine-37 in various tRNAs. The sequence is that of tRNA (guanine-N(1)-)-methyltransferase from Salmonella schwarzengrund (strain CVM19633).